Reading from the N-terminus, the 160-residue chain is Transcription elongation factor GreB (160 aa).

It belongs to the GreA/GreB family. GreB subfamily.

Necessary for efficient RNA polymerase transcription elongation past template-encoded arresting sites. The arresting sites in DNA have the property of trapping a certain fraction of elongating RNA polymerases that pass through, resulting in locked ternary complexes. Cleavage of the nascent transcript by cleavage factors such as GreA or GreB allows the resumption of elongation from the new 3'terminus. GreB releases sequences of up to 9 nucleotides in length. The sequence is that of Transcription elongation factor GreB from Vibrio vulnificus (strain CMCP6).